Consider the following 199-residue polypeptide: Superoxide dismutase [Mn] (199 aa).

Mn(2+)-binding residues include His27, His76, Asp160, and His164.

It belongs to the iron/manganese superoxide dismutase family. It depends on Mn(2+) as a cofactor.

The catalysed reaction is 2 superoxide + 2 H(+) = H2O2 + O2. Its function is as follows. Destroys superoxide anion radicals which are normally produced within the cells and which are toxic to biological systems. The chain is Superoxide dismutase [Mn] (sodA) from Corynebacterium diphtheriae (strain ATCC 700971 / NCTC 13129 / Biotype gravis).